A 321-amino-acid polypeptide reads, in one-letter code: L-Ala-D/L-Glu epimerase (321 aa).

2 residues coordinate substrate: threonine 124 and lysine 149. Lysine 151 functions as the Proton acceptor; specific for (R)-substrate epimerization in the catalytic mechanism. 3 residues coordinate Mg(2+): aspartate 176, glutamate 202, and aspartate 225. Lysine 247 serves as the catalytic Proton acceptor; specific for (S)-substrate epimerization. The substrate site is built by cysteine 275, aspartate 297, and aspartate 299.

It belongs to the mandelate racemase/muconate lactonizing enzyme family. As to quaternary structure, monomer. Mg(2+) serves as cofactor.

The enzyme catalyses L-alanyl-L-glutamate = L-alanyl-D-glutamate. It participates in cell wall biogenesis; peptidoglycan recycling. Its function is as follows. Catalyzes the epimerization of L-Ala-D-Glu to L-Ala-L-Glu and has a role in the recycling of the murein peptide, of which L-Ala-D-Glu is a component. Is also able to catalyze the reverse reaction and the epimerization of all the L-Ala-X dipeptides, except L-Ala-L-Arg, L-Ala-L-Lys and L-Ala-L-Pro. Is also active with L-Gly-L-Glu, L-Phe-L-Glu, and L-Ser-L-Glu, but not with L-Glu-L-Glu, L-Lys-L-Glu, L-Pro-L-Glu, L-Lys-L-Ala, or D-Ala-D-Ala. This is L-Ala-D/L-Glu epimerase (ycjG) from Escherichia coli (strain K12).